We begin with the raw amino-acid sequence, 458 residues long: UDP-N-acetylmuramate--L-alanine ligase (458 aa).

Residue 112–118 (GTHGKTT) coordinates ATP.

It belongs to the MurCDEF family.

It localises to the cytoplasm. The enzyme catalyses UDP-N-acetyl-alpha-D-muramate + L-alanine + ATP = UDP-N-acetyl-alpha-D-muramoyl-L-alanine + ADP + phosphate + H(+). It functions in the pathway cell wall biogenesis; peptidoglycan biosynthesis. Cell wall formation. This chain is UDP-N-acetylmuramate--L-alanine ligase, found in Geotalea uraniireducens (strain Rf4) (Geobacter uraniireducens).